Consider the following 170-residue polypeptide: Acetolactate synthase small subunit (170 aa).

Positions 9–83 (TLSVLVEDKP…NVIKIVEQEE (75 aa)) constitute an ACT domain. Residue lysine 46 forms an Isoglutamyl lysine isopeptide (Lys-Gln) (interchain with Q-Cter in protein Pup) linkage.

The protein belongs to the acetolactate synthase small subunit family. Dimer of large and small chains.

It catalyses the reaction 2 pyruvate + H(+) = (2S)-2-acetolactate + CO2. The protein operates within amino-acid biosynthesis; L-isoleucine biosynthesis; L-isoleucine from 2-oxobutanoate: step 1/4. It functions in the pathway amino-acid biosynthesis; L-valine biosynthesis; L-valine from pyruvate: step 1/4. The polypeptide is Acetolactate synthase small subunit (ilvH) (Mycolicibacterium smegmatis (strain ATCC 700084 / mc(2)155) (Mycobacterium smegmatis)).